The chain runs to 512 residues: Cytoplasmic tRNA 2-thiolation protein 2-A (512 aa).

The protein belongs to the CTU2/NCS2 family.

The protein localises to the cytoplasm. The protein operates within tRNA modification; 5-methoxycarbonylmethyl-2-thiouridine-tRNA biosynthesis. Functionally, plays a central role in 2-thiolation of mcm(5)S(2)U at tRNA wobble positions of tRNA(Lys), tRNA(Glu) and tRNA(Gln). May act by forming a heterodimer with ctu1/atpbd3 that ligates sulfur from thiocarboxylated urm1 onto the uridine of tRNAs at wobble position. The polypeptide is Cytoplasmic tRNA 2-thiolation protein 2-A (ctu2-a) (Xenopus laevis (African clawed frog)).